A 609-amino-acid polypeptide reads, in one-letter code: Zinc metalloproteinase-disintegrin-like (609 aa).

The first 20 residues, 1–20 (MIQVLLVTICLAALPYQGSS), serve as a signal peptide directing secretion. Positions 21–189 (IILESGNVND…KKASQLVVTA (169 aa)) are excised as a propeptide. A Peptidase M12B domain is found at 198-393 (RFVELVLVVD…QNPECIVNEP (196 aa)). Glu201 and Asp285 together coordinate Ca(2+). Intrachain disulfides connect Cys308/Cys388, Cys348/Cys372, and Cys350/Cys355. His333 is a binding site for Zn(2+). The active site involves Glu334. Zn(2+)-binding residues include His337 and His343. N-linked (GlcNAc...) asparagine glycosylation occurs at Asn371. Cys388, Asn391, Val403, Asn406, Leu408, Glu410, Glu413, and Asp416 together coordinate Ca(2+). One can recognise a Disintegrin domain in the interval 401 to 487 (PPVCGNELLE…ECPADVFHKN (87 aa)). 14 cysteine pairs are disulfide-bonded: Cys404-Cys433, Cys415-Cys428, Cys417-Cys423, Cys427-Cys450, Cys441-Cys447, Cys446-Cys472, Cys459-Cys479, Cys466-Cys498, Cys491-Cys503, Cys510-Cys560, Cys525-Cys571, Cys538-Cys548, Cys555-Cys597, and Cys591-Cys602. The short motif at 465 to 467 (ECD) is the D/ECD-tripeptide element. Residues Asp467, Pro468, Glu470, Asp482, and Val483 each contribute to the Ca(2+) site.

This sequence belongs to the venom metalloproteinase (M12B) family. P-III subfamily. P-IIIa sub-subfamily. In terms of assembly, monomer. It depends on Zn(2+) as a cofactor. Expressed by the venom gland.

It is found in the secreted. Functionally, this protein is a zinc metalloprotease from snake venom that possesses hemorrhagic activity. The sequence is that of Zinc metalloproteinase-disintegrin-like from Crotalus durissus durissus (Central American rattlesnake).